The primary structure comprises 509 residues: Maturase K (509 aa).

This sequence belongs to the intron maturase 2 family. MatK subfamily.

Its subcellular location is the plastid. The protein localises to the chloroplast. Functionally, usually encoded in the trnK tRNA gene intron. Probably assists in splicing its own and other chloroplast group II introns. The sequence is that of Maturase K from Atropa belladonna (Belladonna).